The chain runs to 381 residues: MGDRERNKKRLLELLQAAGTGNGHCADCGAADPDWASYKLGIFICLHCSGVHRNFPDISKVKSVRLDFWDDSMVEFMTHHGNLNVKAKFEARVPAFYYVPQANDCLVLKEQWIRAKYERQEFTAIDKAVSHPGNREGFLWKRGRDNAQFLRRRFVLLSREGLLKYYTKEEGKAPKAVISIKDLNATFQTEKIGHPHGLQITYRKEGHTRNLFVYHDSGKEIVDWFNALRAARLQYLKLAFPDLPESELVPLITRNYLKQGFMEKTGPKHREPFKKRWFALDPQERRLLYYKNPLDAFELGQVFLGSNEQGYEVWEDLPKGIRGNRWKAGLTVITPERKFIFTCPTEKEQREWLESLRGVLSSPLSPLHLLTTSAETGCGLG.

In terms of domain architecture, Arf-GAP spans 9–132 (KRLLELLQAA…TAIDKAVSHP (124 aa)). The C4-type zinc finger occupies 25–48 (CADCGAADPDWASYKLGIFICLHC). PH domains follow at residues 132–233 (PGNR…AARL) and 255–361 (NYLK…GVLS).

The protein resides in the cytoplasm. The protein localises to the cell membrane. GTPase-activating protein for the ADP ribosylation factor family (Potential). Binds phosphatidylinositol 3,4,5-trisphosphate (PtdInsP3) and inositol 1,3,4,5-tetrakisphosphate (InsP4). Possesses a stoichiometry of two binding sites for InsP4 with identical affinity. The polypeptide is Arf-GAP with dual PH domain-containing protein 2 (Adap2) (Mus musculus (Mouse)).